Consider the following 4588-residue polypeptide: Protocadherin Fat 1 (4588 aa).

A signal peptide spans 1-21; it reads MGRHLALLLLLLLLFQHFGDS. At 22-4181 the chain is on the extracellular side; it reads DGSQRLEQTP…STPWNIGLAE (4160 aa). Cadherin domains follow at residues 35–149 and 150–257; these read THLE…RPLF and SPTS…APVI. Asparagine 40 is a glycosylation site (N-linked (GlcNAc...) asparagine). Asparagine 333 is a glycosylation site (N-linked (GlcNAc...) asparagine). 31 Cadherin domains span residues 368 to 463, 464 to 569, 570 to 673, 718 to 822, 823 to 927, 928 to 1034, 1035 to 1139, 1140 to 1245, 1246 to 1357, 1359 to 1456, 1457 to 1562, 1563 to 1667, 1668 to 1765, 1766 to 1879, 1880 to 1979, 1980 to 2081, 2082 to 2182, 2183 to 2283, 2284 to 2390, 2391 to 2492, 2493 to 2596, 2597 to 2703, 2704 to 2809, 2810 to 2918, 2919 to 3023, 3024 to 3125, 3126 to 3230, 3231 to 3335, 3336 to 3440, 3441 to 3545, and 3546 to 3647; these read EKDV…PPEF, TQTA…TPLF, EKIN…VNLQ, STLP…PPEF, LQES…PPTF, IPPN…PPVF, SSFV…APQT, SEPV…KPQF, LQKF…EPIS, EESF…RPQF, STSK…APWF, TASS…SPKF, TSKE…APVF, MQAE…PPVF, AKPL…HLKF, TQDV…APVF, VNLP…MPVF, EKPF…PPVF, AQQS…PPLF, EQQI…SPAF, LQNE…APQF, RATK…LPKF, SEPF…SPVF, ESSP…PPRF, TAEI…SPVC, EKTL…APEF, SADP…PPVF, EYRE…TPVF, SQDT…APVF, SRGN…PPAI, and LPLE…AIRF. Asparagine 660, asparagine 740, and asparagine 791 each carry an N-linked (GlcNAc...) asparagine glycan. N-linked (GlcNAc...) asparagine glycosylation is present at asparagine 998. 2 N-linked (GlcNAc...) asparagine glycosylation sites follow: asparagine 1426 and asparagine 1551. Asparagine 1748, asparagine 1864, asparagine 1902, asparagine 1940, and asparagine 1991 each carry an N-linked (GlcNAc...) asparagine glycan. N-linked (GlcNAc...) asparagine glycosylation is found at asparagine 2325 and asparagine 2464. Residues asparagine 3324, asparagine 3422, asparagine 3444, asparagine 3613, asparagine 3640, and asparagine 3716 are each glycosylated (N-linked (GlcNAc...) asparagine). Residues 3790 to 3827 form the EGF-like 1 domain; it reads VHHGCEDDPCPEGSECVSDPWEEKHTCVCPSGRFGQCP. 15 disulfides stabilise this stretch: cysteine 3794/cysteine 3805, cysteine 3799/cysteine 3816, cysteine 3818/cysteine 3826, cysteine 3976/cysteine 4009, cysteine 4017/cysteine 4028, cysteine 4022/cysteine 4038, cysteine 4040/cysteine 4049, cysteine 4056/cysteine 4067, cysteine 4061/cysteine 4076, cysteine 4078/cysteine 4087, cysteine 4093/cysteine 4104, cysteine 4098/cysteine 4113, cysteine 4115/cysteine 4124, cysteine 4131/cysteine 4142, and cysteine 4136/cysteine 4151. Positions 3829 to 4009 constitute a Laminin G-like domain; it reads SSSMTLTGNS…EESVDVSPGC (181 aa). EGF-like domains follow at residues 4013–4050, 4052–4088, and 4089–4125; these read ATED…THCE, SVNP…QRCQ, and LSPY…ERCQ. An EGF-like 5; calcium-binding domain is found at 4127–4163; the sequence is DIDECSGNPCLHGALCENTHGSYHCNCSHEYRGRHCE. Asparagine 4152 carries N-linked (GlcNAc...) asparagine glycosylation. A disulfide bridge links cysteine 4153 with cysteine 4162. Residues 4182 to 4202 traverse the membrane as a helical segment; that stretch reads GIGIVVFVAGIFLLVVVFVLC. Topologically, residues 4203-4588 are cytoplasmic; it reads RKMISRKKKH…PLDSQQHTEV (386 aa). The short motif at 4204 to 4214 is the Nuclear localization signal element; the sequence is KMISRKKKHQA. 3 disordered regions span residues 4255 to 4275, 4303 to 4327, and 4343 to 4376; these read SYTP…SFEG, SVAP…QKPS, and LSKK…SESC. Residues 4256–4265 show a composition bias toward polar residues; that stretch reads YTPSIPSDSR. A compositionally biased stretch (polar residues) spans 4363–4374; sequence SEVQSLSSFQSE. A PTB-like motif motif is present at residues 4378–4382; it reads DNGYH. 2 disordered regions span residues 4435–4479 and 4565–4588; these read FPPP…SSSR and ESGD…HTEV.

Interacts (via the C-terminus 4300-4400 AA) with ATN1. Interacts with RERE. Post-translationally, undergoes proteolytic cleavage. The extracellular domain is cleaved off and the cytoplasmic domain (about 400 AA) shuttles to the nucleus. In terms of tissue distribution, expressed in many epithelial and some endothelial and smooth muscle cells.

The protein resides in the cell membrane. Its subcellular location is the nucleus. Functionally, plays an essential role for cellular polarization, directed cell migration and modulating cell-cell contact. This Homo sapiens (Human) protein is Protocadherin Fat 1 (FAT1).